We begin with the raw amino-acid sequence, 601 residues long: Casbene synthase, chloroplastic (601 aa).

The N-terminal 56 residues, 1–56 (MALPSAAMQSNPEKLNLFHRLSSLPTTSLEYGNNRFPFFSSSAKSHFKKPTQACLS), are a transit peptide targeting the chloroplast. D355, D359, N499, S503, and E507 together coordinate Mg(2+). The short motif at 355–359 (DDTID) is the DDXXD motif element.

It belongs to the terpene synthase family. It depends on Mg(2+) as a cofactor.

It is found in the plastid. The protein localises to the chloroplast. The catalysed reaction is (2E,6E,10E)-geranylgeranyl diphosphate = casbene + diphosphate. Functionally, catalyzes the cyclization of geranylgeranyl diphosphate to casbene, a diterpene phytoalexin with antibacterial and antifungal activity. This is Casbene synthase, chloroplastic from Ricinus communis (Castor bean).